A 457-amino-acid chain; its full sequence is Probable cytosolic Fe-S cluster assembly factor oxy-4 (457 aa).

Cysteine 25 contacts [4Fe-4S] cluster. Residues 38–59 (KEESQVNIRTKKPKDKESSKTE) form a disordered region. [4Fe-4S] cluster is bound by residues cysteine 71, cysteine 74, cysteine 77, cysteine 176, cysteine 232, cysteine 380, and cysteine 384.

Belongs to the NARF family.

In terms of biological role, component of the cytosolic iron-sulfur (Fe/S) protein assembly machinery. Required for maturation of extramitochondrial Fe/S proteins. In Caenorhabditis elegans, this protein is Probable cytosolic Fe-S cluster assembly factor oxy-4 (oxy-4).